The chain runs to 339 residues: Glutamyl-tRNA reductase (339 aa).

Substrate-binding positions include 50–53, serine 102, 107–109, and glutamine 113; these read TCHR and ETE. The active-site Nucleophile is cysteine 51. NADP(+) is bound at residue 181 to 186; that stretch reads GYSDIN.

It belongs to the glutamyl-tRNA reductase family. In terms of assembly, homodimer.

It carries out the reaction (S)-4-amino-5-oxopentanoate + tRNA(Glu) + NADP(+) = L-glutamyl-tRNA(Glu) + NADPH + H(+). It participates in porphyrin-containing compound metabolism; protoporphyrin-IX biosynthesis; 5-aminolevulinate from L-glutamyl-tRNA(Glu): step 1/2. Functionally, catalyzes the NADPH-dependent reduction of glutamyl-tRNA(Glu) to glutamate 1-semialdehyde (GSA). The chain is Glutamyl-tRNA reductase from Chlamydia pneumoniae (Chlamydophila pneumoniae).